We begin with the raw amino-acid sequence, 776 residues long: DNA topoisomerase 1 (776 aa).

Residues 1–111 (MKLVIVESPA…VKSDDFFKRV (111 aa)) form the Toprim domain. The Mg(2+) site is built by Glu7 and Asp80. A Topo IA-type catalytic domain is found at 132–568 (DTNLVNAQQA…FWSGFNHNIE (437 aa)). The interaction with DNA stretch occupies residues 166–171 (SAGRVQ). The O-(5'-phospho-DNA)-tyrosine intermediate role is filled by Tyr304. The C4-type zinc finger occupies 600–627 (CPSCNTGELSLKLGKFGAFLACSNYPEC).

Belongs to the type IA topoisomerase family. Monomer. Requires Mg(2+) as cofactor.

It carries out the reaction ATP-independent breakage of single-stranded DNA, followed by passage and rejoining.. In terms of biological role, releases the supercoiling and torsional tension of DNA, which is introduced during the DNA replication and transcription, by transiently cleaving and rejoining one strand of the DNA duplex. Introduces a single-strand break via transesterification at a target site in duplex DNA. The scissile phosphodiester is attacked by the catalytic tyrosine of the enzyme, resulting in the formation of a DNA-(5'-phosphotyrosyl)-enzyme intermediate and the expulsion of a 3'-OH DNA strand. The free DNA strand then undergoes passage around the unbroken strand, thus removing DNA supercoils. Finally, in the religation step, the DNA 3'-OH attacks the covalent intermediate to expel the active-site tyrosine and restore the DNA phosphodiester backbone. The chain is DNA topoisomerase 1 from Rickettsia conorii (strain ATCC VR-613 / Malish 7).